Consider the following 30-residue polypeptide: Cycloviolacin-H1 (30 aa).

The cyclopeptide (Gly-Asn) cross-link spans 1–30 (GIPCGESCVYIPCLTSAIGCSCKSKVCYRN). 3 cysteine pairs are disulfide-bonded: C4-C20, C8-C22, and C13-C27.

This sequence belongs to the cyclotide family. Bracelet subfamily. This is a cyclic peptide.

In terms of biological role, probably participates in a plant defense mechanism. This Viola hederacea (Australian violet) protein is Cycloviolacin-H1.